The following is a 1462-amino-acid chain: Protein peg1 (1462 aa).

Disordered regions lie at residues 528-563 (SFSK…SRER) and 573-592 (FHST…SIAI). 2 stretches are compositionally biased toward low complexity: residues 538-552 (SSNS…RLGL) and 574-589 (HSTS…HSPS). S599 carries the phosphoserine modification. The disordered stretch occupies residues 838–928 (SSTHQEHLSK…NCSEESLDDH (91 aa)). The segment covering 847 to 866 (KNLPTLNTSSSSNSSQTDLL) has biased composition (low complexity). Residues 870–896 (GKGETKETEMQSPIESKEGLLSKDTHI) show a composition bias toward basic and acidic residues. S1221 carries the phosphoserine modification. Residues 1342-1367 (TLIAEIADLQGLYEFTQQRLQSLNTE) are a coiled coil.

It belongs to the CLASP family. As to quaternary structure, interacts with microtubules. Interacts with dhc1, mal3 and tea1.

Its subcellular location is the cytoplasm. It is found in the cytoskeleton. The protein resides in the spindle. The protein localises to the microtubule organizing center. It localises to the spindle pole body. In terms of biological role, microtubule binding protein that regulates the stability of dynamic microtubules. Required for mitotic spindle formation. The sequence is that of Protein peg1 (peg1) from Schizosaccharomyces pombe (strain 972 / ATCC 24843) (Fission yeast).